We begin with the raw amino-acid sequence, 95 residues long: UPF0298 protein LVIS_1401 (95 aa).

It belongs to the UPF0298 family.

Its subcellular location is the cytoplasm. This is UPF0298 protein LVIS_1401 from Levilactobacillus brevis (strain ATCC 367 / BCRC 12310 / CIP 105137 / JCM 1170 / LMG 11437 / NCIMB 947 / NCTC 947) (Lactobacillus brevis).